A 512-amino-acid polypeptide reads, in one-letter code: GMP synthase [glutamine-hydrolyzing] (512 aa).

The 194-residue stretch at 3 to 196 (NILILDFGSQ…VKHICQASET (194 aa)) folds into the Glutamine amidotransferase type-1 domain. Cys-80 functions as the Nucleophile in the catalytic mechanism. Residues His-169 and Glu-171 contribute to the active site. The region spanning 197-387 (WKIETIEKQL…LGLPDVLISR (191 aa)) is the GMPS ATP-PPase domain. 225 to 231 (SGGVDSS) lines the ATP pocket.

Homodimer.

It catalyses the reaction XMP + L-glutamine + ATP + H2O = GMP + L-glutamate + AMP + diphosphate + 2 H(+). It functions in the pathway purine metabolism; GMP biosynthesis; GMP from XMP (L-Gln route): step 1/1. Catalyzes the synthesis of GMP from XMP. The sequence is that of GMP synthase [glutamine-hydrolyzing] from Chlamydia caviae (strain ATCC VR-813 / DSM 19441 / 03DC25 / GPIC) (Chlamydophila caviae).